Here is a 259-residue protein sequence, read N- to C-terminus: Ribonuclease PH (259 aa).

Residues arginine 88 and 126–128 (GTR) contribute to the phosphate site.

The protein belongs to the RNase PH family. In terms of assembly, homohexameric ring arranged as a trimer of dimers.

The catalysed reaction is tRNA(n+1) + phosphate = tRNA(n) + a ribonucleoside 5'-diphosphate. In terms of biological role, phosphorolytic 3'-5' exoribonuclease that plays an important role in tRNA 3'-end maturation. Removes nucleotide residues following the 3'-CCA terminus of tRNAs; can also add nucleotides to the ends of RNA molecules by using nucleoside diphosphates as substrates, but this may not be physiologically important. Probably plays a role in initiation of 16S rRNA degradation (leading to ribosome degradation) during starvation. The chain is Ribonuclease PH from Mycobacterium bovis (strain ATCC BAA-935 / AF2122/97).